The chain runs to 84 residues: Large ribosomal subunit protein uL29 (84 aa).

This sequence belongs to the universal ribosomal protein uL29 family.

The sequence is that of Large ribosomal subunit protein uL29 from Mycoplasma mobile (strain ATCC 43663 / 163K / NCTC 11711) (Mesomycoplasma mobile).